The primary structure comprises 659 residues: Pseudouridylate synthase 7 homolog (659 aa).

Residue Met-1 is modified to N-acetylmethionine. 2 stretches are compositionally biased toward polar residues: residues 1–10 (MEMTEMTSVS) and 39–54 (CPTT…SLPS). The disordered stretch occupies residues 1-99 (MEMTEMTSVS…EEEEEEAESF (99 aa)). Ser-10 carries the phosphoserine modification. Residues 75–98 (PSEEEEEEDGLSEEEEEEEEEAES) show a composition bias toward acidic residues. Ser-125 carries the post-translational modification Phosphoserine. The active-site Nucleophile is the Asp-292. One can recognise a TRUD domain in the interval 368 to 578 (GFINYYGMQR…SGAYRKIIIR (211 aa)).

It belongs to the pseudouridine synthase TruD family. Interacts with SIRT1.

Its subcellular location is the nucleus. The enzyme catalyses a uridine in tRNA = a pseudouridine in tRNA. It carries out the reaction uridine(13) in tRNA = pseudouridine(13) in tRNA. It catalyses the reaction a uridine in mRNA = a pseudouridine in mRNA. Functionally, pseudouridylate synthase that catalyzes pseudouridylation of RNAs. Acts as a regulator of protein synthesis in embryonic stem cells by mediating pseudouridylation of RNA fragments derived from tRNAs (tRFs): pseudouridylated tRFs inhibit translation by targeting the translation initiation complex. Also catalyzes pseudouridylation of mRNAs: mediates pseudouridylation of mRNAs with the consensus sequence 5'-UGUAG-3'. Acts as a regulator of pre-mRNA splicing by mediating pseudouridylation of pre-mRNAs at locations associated with alternatively spliced regions. Pseudouridylation of pre-mRNAs near splice sites directly regulates mRNA splicing and mRNA 3'-end processing. In addition to mRNAs and tRNAs, binds other types of RNAs, such as snRNAs, Y RNAs and vault RNAs, suggesting that it can catalyze pseudouridylation of many RNA types. This chain is Pseudouridylate synthase 7 homolog, found in Bos taurus (Bovine).